A 199-amino-acid chain; its full sequence is Inner membrane-spanning protein YciB (199 aa).

6 consecutive transmembrane segments (helical) span residues 4–24, 36–56, 64–84, 90–110, 135–155, and 162–182; these read FIDF…PRIV, IFSA…TLFL, GQWI…TFQS, WKAP…HFIG, LAWV…AFTF, and FKVF…GVFL.

The protein belongs to the YciB family.

The protein localises to the cell inner membrane. In terms of biological role, plays a role in cell envelope biogenesis, maintenance of cell envelope integrity and membrane homeostasis. This chain is Inner membrane-spanning protein YciB, found in Azotobacter vinelandii (strain DJ / ATCC BAA-1303).